The chain runs to 391 residues: Period circadian protein (391 aa).

Disordered stretches follow at residues 27 to 121 (VTAP…PPVT), 163 to 188 (MLEY…WEGE), 241 to 270 (GSSA…QFTQ), and 328 to 357 (SPSG…TSQA). The span at 93–114 (GTSGTGNSGDGGGGGGADGPGS) shows a compositional bias: gly residues. Residues 241–255 (GSSAGGNGSGTGNNN) show a composition bias toward gly residues.

In terms of assembly, forms a heterodimer with timeless (TIM); the complex then translocates into the nucleus. Phosphorylated with a circadian rhythmicity, probably by the double-time protein (dbt). Phosphorylation could be implicated in the stability of per monomer and in the formation of heterodimer per-tim.

The protein resides in the nucleus. The protein localises to the cytoplasm. It localises to the perinuclear region. Its function is as follows. Essential for biological clock functions. Determines the period length of circadian and ultradian rhythms; an increase in PER dosage leads to shortened circadian rhythms and a decrease leads to lengthened circadian rhythms. Essential for the circadian rhythmicity of locomotor activity, eclosion behavior, and for the rhythmic component of the male courtship song that originates in the thoracic nervous system. The biological cycle depends on the rhythmic formation and nuclear localization of the TIM-PER complex. Light induces the degradation of TIM, which promotes elimination of PER. Nuclear activity of the heterodimer coordinatively regulates PER and TIM transcription through a negative feedback loop. Behaves as a negative element in circadian transcriptional loop. Does not appear to bind DNA, suggesting indirect transcriptional inhibition. The protein is Period circadian protein (per) of Drosophila insularis (Fruit fly).